The sequence spans 326 residues: METSNFTLFDPRCRAEAPFAIDAIKQLDIFGKVLYTVLTLMATASMLVFIEECIYIYKKVPAHKKSTIIWVTGVAPVMAIMSCLGMWVPRATMFTDMTSATYFAIVVFKFLILMIEEVGGDNAFLRRCEKQTFKISTGPCCCCCPCLPNVPITRRSLFILKLGSYQFALMKLVLTIFSIVLWTNGSFSLTNVSASGAAIWINSFIGVLTIIALWPVAIMFMHVREALRTLKIVPKYAMYQLVLILSQLQTAIINILALNGTIACSPPYSSQARGYMMSQQLLIVEMFIITLVTRVLYRRQYEPIPEPDDVEEKKTVLSSKKAIDVA.

At 1–28 the chain is on the extracellular side; it reads METSNFTLFDPRCRAEAPFAIDAIKQLD. N-linked (GlcNAc...) asparagine glycosylation is present at Asn5. A helical membrane pass occupies residues 29–49; that stretch reads IFGKVLYTVLTLMATASMLVF. The Cytoplasmic segment spans residues 50 to 67; that stretch reads IEECIYIYKKVPAHKKST. A helical transmembrane segment spans residues 68–88; the sequence is IIWVTGVAPVMAIMSCLGMWV. The Extracellular portion of the chain corresponds to 89–99; the sequence is PRATMFTDMTS. A helical transmembrane segment spans residues 100–120; that stretch reads ATYFAIVVFKFLILMIEEVGG. At 121-161 the chain is on the cytoplasmic side; that stretch reads DNAFLRRCEKQTFKISTGPCCCCCPCLPNVPITRRSLFILK. A helical membrane pass occupies residues 162 to 182; it reads LGSYQFALMKLVLTIFSIVLW. Topologically, residues 183-198 are extracellular; it reads TNGSFSLTNVSASGAA. N-linked (GlcNAc...) asparagine glycosylation is found at Asn184 and Asn191. A helical transmembrane segment spans residues 199–219; the sequence is IWINSFIGVLTIIALWPVAIM. The Cytoplasmic portion of the chain corresponds to 220–237; it reads FMHVREALRTLKIVPKYA. Residues 238-258 traverse the membrane as a helical segment; sequence MYQLVLILSQLQTAIINILAL. Residue Asn259 is glycosylated (N-linked (GlcNAc...) asparagine). At 259–275 the chain is on the extracellular side; sequence NGTIACSPPYSSQARGY. The chain crosses the membrane as a helical span at residues 276–296; the sequence is MMSQQLLIVEMFIITLVTRVL. The Cytoplasmic segment spans residues 297-326; sequence YRRQYEPIPEPDDVEEKKTVLSSKKAIDVA.

Belongs to the OST-alpha family. In terms of assembly, interacts with slc51b. The Ost-alpha/Ost-beta complex is a heterodimer composed of alpha (slc51a) and beta (slc51b) subunit.

It is found in the cell membrane. The protein localises to the endoplasmic reticulum membrane. The catalysed reaction is taurocholate(out) = taurocholate(in). It carries out the reaction prostaglandin E2(out) = prostaglandin E2(in). The enzyme catalyses estrone 3-sulfate(out) = estrone 3-sulfate(in). It catalyses the reaction dehydroepiandrosterone 3-sulfate(out) = dehydroepiandrosterone 3-sulfate(in). The catalysed reaction is tauroursodeoxycholate(out) = tauroursodeoxycholate(in). It carries out the reaction glycoursodeoxycholate(out) = glycoursodeoxycholate(in). The enzyme catalyses glycocholate(out) = glycocholate(in). It catalyses the reaction taurochenodeoxycholate(out) = taurochenodeoxycholate(in). The catalysed reaction is glycochenodeoxycholate(out) = glycochenodeoxycholate(in). It carries out the reaction taurodeoxycholate(out) = taurodeoxycholate(in). The enzyme catalyses glycodeoxycholate(out) = glycodeoxycholate(in). Functionally, essential component of the Ost-alpha/Ost-beta complex, a heterodimer that acts as the intestinal basolateral transporter responsible for the translocation of bile acids (such as taurocholate), steroids (such as estrone sulfate), and eicosanoids (such as prostaglandin E2). This Danio rerio (Zebrafish) protein is Organic solute transporter subunit alpha (slc51a).